We begin with the raw amino-acid sequence, 294 residues long: Small ribosomal subunit biogenesis GTPase RsgA (294 aa).

Positions 63–223 constitute a CP-type G domain; that stretch reads KNELLRPPIA…VADTPGFSSL (161 aa). GTP contacts are provided by residues 112–115 and 166–174; these read SKID and GQSGVGKSS. C247, C252, H254, and C260 together coordinate Zn(2+).

Belongs to the TRAFAC class YlqF/YawG GTPase family. RsgA subfamily. In terms of assembly, monomer. Associates with 30S ribosomal subunit, binds 16S rRNA. The cofactor is Zn(2+).

It is found in the cytoplasm. Functionally, one of several proteins that assist in the late maturation steps of the functional core of the 30S ribosomal subunit. Helps release RbfA from mature subunits. May play a role in the assembly of ribosomal proteins into the subunit. Circularly permuted GTPase that catalyzes slow GTP hydrolysis, GTPase activity is stimulated by the 30S ribosomal subunit. The protein is Small ribosomal subunit biogenesis GTPase RsgA of Halalkalibacterium halodurans (strain ATCC BAA-125 / DSM 18197 / FERM 7344 / JCM 9153 / C-125) (Bacillus halodurans).